Here is a 77-residue protein sequence, read N- to C-terminus: MEVIRIFNKVAERLDKEAAIRIFVLAHQLERDKLIRLLQGLLWRLRFRKPKSKDCLCWFCCRLYYWQLQSTLSIDTA.

The Nuclear export signal signature appears at Leu-34–Leu-42. A Nuclear localization signal motif is present at residues Arg-44–Lys-53.

Its subcellular location is the virion. It is found in the host nucleus. Seems to function as a Vpr-like protein, since it mediates host cell cycle arrest in G2 phase. Cell cycle arrest creates a favorable environment for maximizing viral expression and production. The chain is Probable Vpr-like protein from Felidae (cat family).